We begin with the raw amino-acid sequence, 433 residues long: Delta-aminolevulinic acid dehydratase, chloroplastic (433 aa).

The transit peptide at 1 to 56 (MASTFNIPCNAGTIKNFNNSQRNLGFSSNLGINFAKTRFSNCGDSGRIPSQLVVRA) directs the protein to the chloroplast. The interval 83–115 (NAPSAPPVPPTPKAPSGTPSVSPLSLGRRPRRN) is disordered. Residues 86-95 (SAPPVPPTPK) show a composition bias toward pro residues. Catalysis depends on Lys-301, which acts as the Schiff-base intermediate with substrate. Positions 311 and 323 each coordinate 5-aminolevulinate. Glu-339 lines the Mg(2+) pocket. Residue Lys-354 is the Schiff-base intermediate with substrate of the active site. 5-aminolevulinate is bound by residues Ser-380 and Tyr-419.

Belongs to the ALAD family. As to quaternary structure, homooctamer. Requires Mg(2+) as cofactor.

It is found in the plastid. The protein resides in the chloroplast. The catalysed reaction is 2 5-aminolevulinate = porphobilinogen + 2 H2O + H(+). The protein operates within porphyrin-containing compound metabolism; protoporphyrin-IX biosynthesis; coproporphyrinogen-III from 5-aminolevulinate: step 1/4. In terms of biological role, catalyzes an early step in the biosynthesis of tetrapyrroles. Binds two molecules of 5-aminolevulinate per subunit, each at a distinct site, and catalyzes their condensation to form porphobilinogen. This Spinacia oleracea (Spinach) protein is Delta-aminolevulinic acid dehydratase, chloroplastic (HEMB).